The sequence spans 206 residues: ATP-dependent Clp protease proteolytic subunit 1 (206 aa).

Ser-100 serves as the catalytic Nucleophile. The active site involves His-125.

It belongs to the peptidase S14 family. In terms of assembly, fourteen ClpP subunits assemble into 2 heptameric rings which stack back to back to give a disk-like structure with a central cavity, resembling the structure of eukaryotic proteasomes.

The protein resides in the cytoplasm. The catalysed reaction is Hydrolysis of proteins to small peptides in the presence of ATP and magnesium. alpha-casein is the usual test substrate. In the absence of ATP, only oligopeptides shorter than five residues are hydrolyzed (such as succinyl-Leu-Tyr-|-NHMec, and Leu-Tyr-Leu-|-Tyr-Trp, in which cleavage of the -Tyr-|-Leu- and -Tyr-|-Trp bonds also occurs).. In terms of biological role, cleaves peptides in various proteins in a process that requires ATP hydrolysis. Has a chymotrypsin-like activity. Plays a major role in the degradation of misfolded proteins. This chain is ATP-dependent Clp protease proteolytic subunit 1, found in Myxococcus xanthus (strain DK1622).